The sequence spans 970 residues: Type III restriction-modification enzyme EcoPI Res subunit (970 aa).

Residues 75–540 (ARSNVIDVSM…EVGRGLRLPV (466 aa)) are helicase-like domain. Positions 894–918 (TYSPDFAYVVKTAEGDYLNFIIETK) are endonuclease domain.

This sequence belongs to the type III restriction-modification system Res protein family. As to quaternary structure, a heterotetramer with stoichiometry Res(2)Mod(2). Mg(2+) serves as cofactor. The cofactor is S-adenosyl-L-methionine.

The enzyme catalyses Endonucleolytic cleavage of DNA to give specific double-stranded fragments with terminal 5'-phosphates.. In terms of biological role, a type III restriction enzyme that recognizes 2 inversely oriented double-stranded sequences 5'-AGACC-3' and cleaves DNA 25-27 base pairs downstream of one site, producing a single-strand 5' protrusion of two nucleotides. DNA restriction requires both the Res and Mod subunits. DNA topology affects its action; relaxed and negatively supercoiled DNA are digested but positively supercoiled DNA is not a good substrate. After binding to one recognition site undergoes random one-dimensional diffusion along DNA until it collides with a stationary enzyme bound to the second DNA site, which is when DNA cleavage occurs. The protein is Type III restriction-modification enzyme EcoPI Res subunit of Enterobacteriaceae (Bacteriophage P1).